Consider the following 1238-residue polypeptide: ATP-dependent helicase/nuclease subunit A (1238 aa).

Residues 12–490 (VSWTDDQWKA…IDLNANFRSR (479 aa)) form the UvrD-like helicase ATP-binding domain. Position 33 to 40 (33 to 40 (AAAGSGKT)) interacts with ATP. The UvrD-like helicase C-terminal domain occupies 510–818 (GEILYDDNAS…RLVTIHSSKG (309 aa)).

It belongs to the helicase family. AddA subfamily. As to quaternary structure, heterodimer of AddA and AddB/RexB. It depends on Mg(2+) as a cofactor.

The enzyme catalyses Couples ATP hydrolysis with the unwinding of duplex DNA by translocating in the 3'-5' direction.. It carries out the reaction ATP + H2O = ADP + phosphate + H(+). In terms of biological role, the heterodimer acts as both an ATP-dependent DNA helicase and an ATP-dependent, dual-direction single-stranded exonuclease. Recognizes the chi site generating a DNA molecule suitable for the initiation of homologous recombination. The AddA nuclease domain is required for chi fragment generation; this subunit has the helicase and 3' -&gt; 5' nuclease activities. The protein is ATP-dependent helicase/nuclease subunit A of Lysinibacillus sphaericus (strain C3-41).